Here is a 253-residue protein sequence, read N- to C-terminus: MSESSEKTGTTHFGFRQVAAKDKKTLVAEVFTSVSRRYDLMNDLMSLGIHRAWKRYFVATAQVKSGDRVLDLAGGTGDIAMLLKNRVGAEGSIVLGDINASMLSVGRDRLIDRGVVAHLDYVQCNAEALPFQDKCFDLVTMSFGLRNVTDKDTALCEMFRVLKVGGQARVLEFSTVTAEWFKPIYDFHSFQVLPRLGRLFARDAASYRYLAESIRKHPPQEELQAMMGAAGFERCRYRNLTGGIVAIHSGYKY.

S-adenosyl-L-methionine is bound by residues threonine 76, aspartate 97, 125-126 (NA), and serine 142.

It belongs to the class I-like SAM-binding methyltransferase superfamily. MenG/UbiE family.

The enzyme catalyses a 2-demethylmenaquinol + S-adenosyl-L-methionine = a menaquinol + S-adenosyl-L-homocysteine + H(+). It catalyses the reaction a 2-methoxy-6-(all-trans-polyprenyl)benzene-1,4-diol + S-adenosyl-L-methionine = a 5-methoxy-2-methyl-3-(all-trans-polyprenyl)benzene-1,4-diol + S-adenosyl-L-homocysteine + H(+). It functions in the pathway quinol/quinone metabolism; menaquinone biosynthesis; menaquinol from 1,4-dihydroxy-2-naphthoate: step 2/2. It participates in cofactor biosynthesis; ubiquinone biosynthesis. In terms of biological role, methyltransferase required for the conversion of demethylmenaquinol (DMKH2) to menaquinol (MKH2) and the conversion of 2-polyprenyl-6-methoxy-1,4-benzoquinol (DDMQH2) to 2-polyprenyl-3-methyl-6-methoxy-1,4-benzoquinol (DMQH2). The sequence is that of Ubiquinone/menaquinone biosynthesis C-methyltransferase UbiE from Xylella fastidiosa (strain 9a5c).